Here is a 163-residue protein sequence, read N- to C-terminus: Sorting nexin-3 (163 aa).

A disordered region spans residues 1 to 20 (MASDQDNSGLDAPGSQFHRP). The PX domain maps to 42–159 (NFLEIEVRNP…AAFVQDPNWD (118 aa)). Residues Arg-85, Ser-87, Lys-111, Arg-116, and Arg-125 each contribute to the a 1,2-diacyl-sn-glycero-3-phospho-(1D-myo-inositol-3-phosphate) site.

This sequence belongs to the sorting nexin family.

It is found in the cytoplasm. The protein resides in the golgi apparatus membrane. Its subcellular location is the prevacuolar compartment membrane. In terms of biological role, required for retention of late Golgi membrane proteins. Component of the retrieval machinery that functions by direct interaction with the cytosolic tails of certain TGN membrane proteins during the sorting/budding process at the prevacuolar compartment. Binds phosphatidylinositol 3-phosphate (PtdIns(P3)). The sequence is that of Sorting nexin-3 (SNX3) from Gibberella zeae (strain ATCC MYA-4620 / CBS 123657 / FGSC 9075 / NRRL 31084 / PH-1) (Wheat head blight fungus).